The primary structure comprises 724 residues: Aquaglyceroporin-4 (724 aa).

Disordered stretches follow at residues 1-167 (MADE…SIRR), 248-267 (INMA…NQAD), and 302-396 (AHGL…DLDG). Over 1–434 (MADEEIKPTS…VIRLRFREPL (434 aa)) the chain is Cytoplasmic. Residues 87-96 (LTGQVPQDND) are compositionally biased toward polar residues. Positions 252 to 265 (QQQQQQQQQQPQNQ) are enriched in low complexity. 2 stretches are compositionally biased toward polar residues: residues 307-325 (SPTN…TAPS) and 360-370 (PSQTSQNSQNE). The helical transmembrane segment at 435-455 (AELLAVTCQLTLGFCADLVVV) threads the bilayer. The Extracellular portion of the chain corresponds to 456–472 (TSGKNASPAGNEATTDW). A helical membrane pass occupies residues 473 to 493 (AWGLASMLGIYIAGGISGAHL). The short motif at 494 to 496 (NPA) is the NPA 1 element. The Cytoplasmic portion of the chain corresponds to 494-513 (NPAISIMLWIYRGFPLRKVP). A helical membrane pass occupies residues 514 to 534 (MYVLAQILGAFIAALISFGLY). Residues 535-567 (QTNIVEYGGTDLKTSDTMGAFITYPRYPWINAS) are Extracellular-facing. Asn-565 carries N-linked (GlcNAc...) asparagine glycosylation. A helical membrane pass occupies residues 568–588 (TSFFTEFVGTAILAVAVLALG). The Cytoplasmic portion of the chain corresponds to 589 to 595 (DDMNAPP). Residues 596-616 (GAGMSAFILGLVITVLSMAFG) form a helical membrane-spanning segment. The Extracellular segment spans residues 617–647 (YNTGAALNPSRDLGPRLALAALGYGKDLFTD). Residues 624-626 (NPS) carry the NPA 2 motif. Residues 648 to 668 (VYWIWGNWCAPILGAIFGAFL) form a helical membrane-spanning segment. Residues 669–724 (YDAAIFAGGESPVNYPRKRIKRAGHKWRKKWGVRLRKMKPAKKGEDEAYRRWKESQ) lie on the Cytoplasmic side of the membrane.

The protein belongs to the MIP/aquaporin (TC 1.A.8) family.

It is found in the membrane. The catalysed reaction is H2O(in) = H2O(out). It catalyses the reaction glycerol(in) = glycerol(out). Water channel required to facilitate the transport of water across membranes. May play a role in the vegetative growth. This is Aquaglyceroporin-4 from Botryotinia fuckeliana (strain B05.10) (Noble rot fungus).